Reading from the N-terminus, the 126-residue chain is Small ribosomal subunit protein uS11 (126 aa).

It belongs to the universal ribosomal protein uS11 family. As to quaternary structure, part of the 30S ribosomal subunit. Interacts with proteins S7 and S18. Binds to IF-3.

In terms of biological role, located on the platform of the 30S subunit, it bridges several disparate RNA helices of the 16S rRNA. Forms part of the Shine-Dalgarno cleft in the 70S ribosome. In Desulfotalea psychrophila (strain LSv54 / DSM 12343), this protein is Small ribosomal subunit protein uS11.